The following is a 221-amino-acid chain: Chalcone--flavanone isomerase (221 aa).

3 residues coordinate substrate: threonine 50, asparagine 115, and threonine 192.

The protein belongs to the chalcone isomerase family.

The enzyme catalyses a chalcone = a flavanone.. It functions in the pathway secondary metabolite biosynthesis; flavonoid biosynthesis. In terms of biological role, catalyzes the intramolecular cyclization of bicyclic chalcones into tricyclic (S)-flavanones. Responsible for the isomerization of 4,2',4',6'-tetrahydroxychalcone (also termed chalcone) into naringenin. This is Chalcone--flavanone isomerase (CHI) from Phaseolus vulgaris (Kidney bean).